Here is a 147-residue protein sequence, read N- to C-terminus: Allograft inflammatory factor 1 (147 aa).

An N-acetylserine modification is found at Ser-2. At Lys-11 the chain carries N6-acetyllysine. Phosphoserine is present on Ser-39. 2 consecutive EF-hand domains span residues 45 to 80 and 81 to 115; these read SKLE…LGVP and KTHL…GKRS. Ca(2+) contacts are provided by Asp-58, Asn-60, Asn-62, Asp-64, Thr-100, and Asp-105. A disordered region spans residues 128–147; the sequence is AREKEKPTGPPAKKAISELP.

In terms of assembly, homodimer (Potential). Monomer. Interacts with LCP1. In terms of processing, phosphorylated on serine residues.

The protein localises to the cytoplasm. The protein resides in the cytoskeleton. It localises to the cell projection. It is found in the ruffle membrane. Its subcellular location is the phagocytic cup. Its function is as follows. Actin-binding protein that enhances membrane ruffling and RAC activation. Enhances the actin-bundling activity of LCP1. Binds calcium. Plays a role in RAC signaling and in phagocytosis. May play a role in macrophage activation and function. Promotes the proliferation of vascular smooth muscle cells and of T-lymphocytes. Enhances lymphocyte migration. Plays a role in vascular inflammation. This chain is Allograft inflammatory factor 1 (AIF1), found in Macaca mulatta (Rhesus macaque).